The primary structure comprises 421 residues: Medium-chain specific acyl-CoA dehydrogenase, mitochondrial (421 aa).

Residues 1–25 constitute a mitochondrion transit peptide; it reads MIALFRRSCGVLRSLSHFDWRSQHT. Lys-69 bears the N6-acetyllysine; alternate mark. An N6-succinyllysine; alternate modification is found at Lys-69. Position 79 is an N6-acetyllysine (Lys-79). 158–167 provides a ligand contact to FAD; sequence YCVTEPVAGS. Ser-167 is an octanoyl-CoA binding site. Residue Lys-179 is modified to N6-succinyllysine. An FAD-binding site is contributed by 191–193; it reads WIT. N6-acetyllysine; alternate is present on Lys-212. Position 212 is an N6-succinyllysine; alternate (Lys-212). Ser-216 is a binding site for octanoyl-CoA. N6-acetyllysine; alternate is present on residues Lys-217, Lys-259, and Lys-271. N6-succinyllysine; alternate is present on residues Lys-217, Lys-259, and Lys-271. Residue Asp-278 coordinates octanoyl-CoA. N6-acetyllysine is present on Lys-279. Octanoyl-CoA is bound at residue Arg-281. Lys-301 bears the N6-acetyllysine mark. Residues 306 to 308 and 316 to 317 contribute to the FAD site; these read RKT and HQ. Residues Arg-349 and Thr-351 each contribute to the octanoyl-CoA site. Position 351 is a phosphothreonine (Thr-351). 374 to 378 provides a ligand contact to FAD; the sequence is QIFGG. An octanoyl-CoA-binding site is contributed by Glu-401. The active-site Proton acceptor is the Glu-401. 402-405 lines the FAD pocket; the sequence is GTAQ.

This sequence belongs to the acyl-CoA dehydrogenase family. In terms of assembly, homotetramer. Interacts with the heterodimeric electron transfer flavoprotein ETF. FAD is required as a cofactor. Acetylated. Could occur at proximity of the cofactor-binding sites and reduce the catalytic activity. Could be deacetylated by SIRT3.

It localises to the mitochondrion matrix. It carries out the reaction a medium-chain 2,3-saturated fatty acyl-CoA + oxidized [electron-transfer flavoprotein] + H(+) = a medium-chain (2E)-enoyl-CoA + reduced [electron-transfer flavoprotein]. The catalysed reaction is pentanoyl-CoA + oxidized [electron-transfer flavoprotein] + H(+) = (2E)-pentenoyl-CoA + reduced [electron-transfer flavoprotein]. The enzyme catalyses hexanoyl-CoA + oxidized [electron-transfer flavoprotein] + H(+) = (2E)-hexenoyl-CoA + reduced [electron-transfer flavoprotein]. It catalyses the reaction octanoyl-CoA + oxidized [electron-transfer flavoprotein] + H(+) = (2E)-octenoyl-CoA + reduced [electron-transfer flavoprotein]. It carries out the reaction decanoyl-CoA + oxidized [electron-transfer flavoprotein] + H(+) = (2E)-decenoyl-CoA + reduced [electron-transfer flavoprotein]. The catalysed reaction is dodecanoyl-CoA + oxidized [electron-transfer flavoprotein] + H(+) = (2E)-dodecenoyl-CoA + reduced [electron-transfer flavoprotein]. The enzyme catalyses tetradecanoyl-CoA + oxidized [electron-transfer flavoprotein] + H(+) = (2E)-tetradecenoyl-CoA + reduced [electron-transfer flavoprotein]. It catalyses the reaction oxidized [electron-transfer flavoprotein] + hexadecanoyl-CoA + H(+) = (2E)-hexadecenoyl-CoA + reduced [electron-transfer flavoprotein]. The protein operates within lipid metabolism; mitochondrial fatty acid beta-oxidation. Functionally, medium-chain specific acyl-CoA dehydrogenase is one of the acyl-CoA dehydrogenases that catalyze the first step of mitochondrial fatty acid beta-oxidation, an aerobic process breaking down fatty acids into acetyl-CoA and allowing the production of energy from fats. The first step of fatty acid beta-oxidation consists in the removal of one hydrogen from C-2 and C-3 of the straight-chain fatty acyl-CoA thioester, resulting in the formation of trans-2-enoyl-CoA. Electron transfer flavoprotein (ETF) is the electron acceptor that transfers electrons to the main mitochondrial respiratory chain via ETF-ubiquinone oxidoreductase (ETF dehydrogenase). Among the different mitochondrial acyl-CoA dehydrogenases, medium-chain specific acyl-CoA dehydrogenase acts specifically on acyl-CoAs with saturated 6 to 12 carbons long primary chains. The protein is Medium-chain specific acyl-CoA dehydrogenase, mitochondrial of Bos taurus (Bovine).